The chain runs to 548 residues: Putative F-box protein At1g33020 (548 aa).

Residues 4 to 53 form the F-box domain; the sequence is AENLDSIPTDLILEIFSRMSTKSIGRCRCVSKLWKSMLGHPYFTELFLTR. The disordered stretch occupies residues 380–404; sequence KPISPPKQKPKPPSTETSSREDHQG. Residues 382–392 show a composition bias toward pro residues; the sequence is ISPPKQKPKPP.

The polypeptide is Putative F-box protein At1g33020 (Arabidopsis thaliana (Mouse-ear cress)).